The primary structure comprises 405 residues: L-carnitine CoA-transferase (405 aa).

CoA is bound by residues lysine 97 and arginine 104. Aspartate 169 functions as the Nucleophile in the catalytic mechanism.

This sequence belongs to the CoA-transferase III family. CaiB subfamily. As to quaternary structure, homodimer.

It localises to the cytoplasm. It catalyses the reaction crotonobetainyl-CoA + (R)-carnitine = crotonobetaine + (R)-carnitinyl-CoA. The enzyme catalyses 4-(trimethylamino)butanoyl-CoA + (R)-carnitine = (R)-carnitinyl-CoA + 4-(trimethylamino)butanoate. The protein operates within amine and polyamine metabolism; carnitine metabolism. Its function is as follows. Catalyzes the reversible transfer of the CoA moiety from gamma-butyrobetainyl-CoA to L-carnitine to generate L-carnitinyl-CoA and gamma-butyrobetaine. Is also able to catalyze the reversible transfer of the CoA moiety from gamma-butyrobetainyl-CoA or L-carnitinyl-CoA to crotonobetaine to generate crotonobetainyl-CoA. The sequence is that of L-carnitine CoA-transferase from Escherichia coli (strain K12 / MC4100 / BW2952).